The sequence spans 514 residues: ATP synthase subunit alpha (514 aa).

Position 170-177 (Gly-170–Ser-177) interacts with ATP.

It belongs to the ATPase alpha/beta chains family. As to quaternary structure, F-type ATPases have 2 components, CF(1) - the catalytic core - and CF(0) - the membrane proton channel. CF(1) has five subunits: alpha(3), beta(3), gamma(1), delta(1), epsilon(1). CF(0) has three main subunits: a(1), b(2) and c(9-12). The alpha and beta chains form an alternating ring which encloses part of the gamma chain. CF(1) is attached to CF(0) by a central stalk formed by the gamma and epsilon chains, while a peripheral stalk is formed by the delta and b chains.

It is found in the cell inner membrane. The catalysed reaction is ATP + H2O + 4 H(+)(in) = ADP + phosphate + 5 H(+)(out). Its function is as follows. Produces ATP from ADP in the presence of a proton gradient across the membrane. The alpha chain is a regulatory subunit. The sequence is that of ATP synthase subunit alpha from Chromohalobacter salexigens (strain ATCC BAA-138 / DSM 3043 / CIP 106854 / NCIMB 13768 / 1H11).